Here is a 446-residue protein sequence, read N- to C-terminus: tRNA-2-methylthio-N(6)-dimethylallyladenosine synthase (446 aa).

The 117-residue stretch at 3–119 folds into the MTTase N-terminal domain; the sequence is KKIFIKTFGC…INEAILNHLK (117 aa). The [4Fe-4S] cluster site is built by cysteine 12, cysteine 48, cysteine 82, cysteine 158, cysteine 162, and cysteine 165. The Radical SAM core domain occupies 144 to 374; it reads KDSKVSSFLT…QEKLFNNQIK (231 aa). In terms of domain architecture, TRAM spans 377-439; that stretch reads KSLENKILNV…QNSLFGKLTE (63 aa).

Belongs to the methylthiotransferase family. MiaB subfamily. As to quaternary structure, monomer. The cofactor is [4Fe-4S] cluster.

The protein resides in the cytoplasm. The catalysed reaction is N(6)-dimethylallyladenosine(37) in tRNA + (sulfur carrier)-SH + AH2 + 2 S-adenosyl-L-methionine = 2-methylsulfanyl-N(6)-dimethylallyladenosine(37) in tRNA + (sulfur carrier)-H + 5'-deoxyadenosine + L-methionine + A + S-adenosyl-L-homocysteine + 2 H(+). Its function is as follows. Catalyzes the methylthiolation of N6-(dimethylallyl)adenosine (i(6)A), leading to the formation of 2-methylthio-N6-(dimethylallyl)adenosine (ms(2)i(6)A) at position 37 in tRNAs that read codons beginning with uridine. The protein is tRNA-2-methylthio-N(6)-dimethylallyladenosine synthase of Pelagibacter ubique (strain HTCC1062).